A 220-amino-acid chain; its full sequence is Pyridoxine/pyridoxamine 5'-phosphate oxidase (220 aa).

Substrate-binding positions include 13–16 (RVEY) and K77. Residues 72 to 77 (RTVLCK), 87 to 88 (FT), K94, and Q116 each bind FMN. Positions 134, 138, and 142 each coordinate substrate. Residues 151–152 (QS) and W197 each bind FMN. Residue 203 to 205 (RVH) coordinates substrate. R207 contacts FMN.

Belongs to the pyridoxamine 5'-phosphate oxidase family. Homodimer. It depends on FMN as a cofactor.

It catalyses the reaction pyridoxamine 5'-phosphate + O2 + H2O = pyridoxal 5'-phosphate + H2O2 + NH4(+). It carries out the reaction pyridoxine 5'-phosphate + O2 = pyridoxal 5'-phosphate + H2O2. It participates in cofactor metabolism; pyridoxal 5'-phosphate salvage; pyridoxal 5'-phosphate from pyridoxamine 5'-phosphate: step 1/1. The protein operates within cofactor metabolism; pyridoxal 5'-phosphate salvage; pyridoxal 5'-phosphate from pyridoxine 5'-phosphate: step 1/1. Its function is as follows. Catalyzes the oxidation of either pyridoxine 5'-phosphate (PNP) or pyridoxamine 5'-phosphate (PMP) into pyridoxal 5'-phosphate (PLP). This Mycobacterium sp. (strain KMS) protein is Pyridoxine/pyridoxamine 5'-phosphate oxidase.